The primary structure comprises 476 residues: Neuropeptide receptor 18 (476 aa).

The Extracellular portion of the chain corresponds to 1–61 (MSSFYNEAKF…LSNHDNSSLM (61 aa)). Residues Asn43 and Asn57 are each glycosylated (N-linked (GlcNAc...) asparagine). A helical transmembrane segment spans residues 62–82 (LIAGFYALLFMFGTCGNAAIL). The Cytoplasmic segment spans residues 83 to 102 (AVVHHVKGQDPRSRHNTTLT). Residues 103–123 (YICILSIVDFLSMLPIPMTII) form a helical membrane-spanning segment. At 124–139 (DQILGFWMFDTFACKL) the chain is on the extracellular side. A disulfide bridge connects residues Cys137 and Cys228. Residues 140 to 160 (FRLLEHIGKIFSTFILVAFSI) form a helical membrane-spanning segment. Topologically, residues 161–179 (DRYCAVCHPLQVRVRNQRT) are cytoplasmic. A helical membrane pass occupies residues 180-200 (VFVFLGIMFFVTCVMLSPILL). Over 201-236 (YAHSKELVMHEKVDLDQEVITRMHLYKCVDDLGREL) the chain is Extracellular. Residues 237 to 257 (FVVFTLYSFVLAYLMPLLFMI) traverse the membrane as a helical segment. Topologically, residues 258-291 (YFYYEMLIRLFKQANVIKQTLVGRRSGGEEKKLT) are cytoplasmic. A helical membrane pass occupies residues 292-312 (IPVGHIAIYTLAICSFHFICW). Topologically, residues 313–334 (TPYWISILYSLYEELYQDTKST) are extracellular. Residues 335-355 (ASPPTYAFIYFMYGVHALPYI) traverse the membrane as a helical segment. Over 356–476 (NSASNFILYG…ITPDTESVIL (121 aa)) the chain is Cytoplasmic.

It belongs to the G-protein coupled receptor 1 family. Expressed in sensory neurons including ASER.

It localises to the cell membrane. Probable receptor for neuropeptide ligand nlp-9 that plays a role in octopamine signaling and specifically, the octapamine inhibition of aversion responses in olfactory sensory neurons. In AWB olfactory sensory neurons, required for the detection of preferred food sources. This Caenorhabditis elegans protein is Neuropeptide receptor 18.